A 437-amino-acid chain; its full sequence is Nuclear hormone receptor family member nhr-28 (437 aa).

Positions 5–80 (KSPCSVCGEA…VGMRKSAVQR (76 aa)) form a DNA-binding region, nuclear receptor. 2 NR C4-type zinc fingers span residues 8-28 (CSVCGEAGDGAHFGAEACRAC) and 44-68 (CRAMGTCVIQKNVRCMCRACRFTKC). The NR LBD domain maps to 115 to 376 (YEETGMPTLS…ETFYELVSGR (262 aa)).

The protein belongs to the nuclear hormone receptor family. Expressed in the pharynx, intestine and hypodermis.

Its subcellular location is the nucleus. Orphan nuclear receptor. This Caenorhabditis elegans protein is Nuclear hormone receptor family member nhr-28 (nhr-28).